Consider the following 263-residue polypeptide: Small ribosomal subunit protein eS4, Y isoform 1 (263 aa).

The 63-residue stretch at 42–104 folds into the S4 RNA-binding domain; it reads LPLIIFLRNR…TGEHFRLVYD (63 aa).

This sequence belongs to the eukaryotic ribosomal protein eS4 family.

This chain is Small ribosomal subunit protein eS4, Y isoform 1 (RPS4Y1), found in Monodelphis domestica (Gray short-tailed opossum).